Reading from the N-terminus, the 736-residue chain is MSAPEPKITPELIASHGLKPDEYQRILDLIGREPTFTELGIFSAMWNEHCSYKSSRIHLKGLPTKAPWVLQGPGENAGVIDIGDNQAVVFKMESHNHPSYIEPYQGATTGVGGILRDVFTMGARPIACLNALSFGDPSHPKTRHLVSGVVAGVGGYGNSFGVPTVGGQTRFHTRYDGNILVNAMAVGLADADKIFLAAASGVGMPIVYLGSKTGRDGMGGATMASAEFDEGSDEKRPTVQVGDPFAEKLLLEACLEIMAKDCVIAIQDMGAAGLTCSAVEMGAKGDLGVELDLDAVPTRETGMTAYEMMLSESQERMLMVLKPEKEKEAEEIFKKWGLDFAIVGYTTPTKRFVVKHGGQVKADLPIKELGDEAPLYDRPWVESPKLPVIHARDINAPMGAAEALEKLLATPDLCSKRWVWEQYDHVIGGNTVQRPGGDAAVVRIEDGPKGLALTVDVTPRYCEADPFEGGKQAVAEAYRNITAVGGKPLAITDNLNFGNPERPEIMGQLVGCLKGISEACIALDSPIVSGNVSLYNETSGRGILPTPSIGGVGVLDDFTKSATLAFKAEGEAILLIGETKGWLGQSVYLREICGREEGAPPPVDLAVEKRHGDVVRGMIHAGTATAVHDVSDGGLLVAIAEMAIAGNIGASLDAPPGETVSHAWWFGEDQARYVVTVKEADLLAVKTKLKTIGVPCTQIGVTGGHALKIEGERTVDLKALRHAHEHWLPDYMGGKN.

His-49 is a catalytic residue. The ATP site is built by Tyr-52 and Lys-91. Glu-93 is a Mg(2+) binding site. Substrate-binding positions include 94-97 and Arg-116; that span reads SHNH. Catalysis depends on His-95, which acts as the Proton acceptor. Asp-117 contributes to the Mg(2+) binding site. Gln-240 is a substrate binding site. Asp-268 lines the Mg(2+) pocket. 312–314 lines the substrate pocket; that stretch reads ESQ. ATP contacts are provided by Asp-493 and Gly-530. Asn-531 is a Mg(2+) binding site. Ser-533 is a substrate binding site.

Belongs to the FGAMS family. Monomer. Part of the FGAM synthase complex composed of 1 PurL, 1 PurQ and 2 PurS subunits.

The protein resides in the cytoplasm. It carries out the reaction N(2)-formyl-N(1)-(5-phospho-beta-D-ribosyl)glycinamide + L-glutamine + ATP + H2O = 2-formamido-N(1)-(5-O-phospho-beta-D-ribosyl)acetamidine + L-glutamate + ADP + phosphate + H(+). The protein operates within purine metabolism; IMP biosynthesis via de novo pathway; 5-amino-1-(5-phospho-D-ribosyl)imidazole from N(2)-formyl-N(1)-(5-phospho-D-ribosyl)glycinamide: step 1/2. In terms of biological role, part of the phosphoribosylformylglycinamidine synthase complex involved in the purines biosynthetic pathway. Catalyzes the ATP-dependent conversion of formylglycinamide ribonucleotide (FGAR) and glutamine to yield formylglycinamidine ribonucleotide (FGAM) and glutamate. The FGAM synthase complex is composed of three subunits. PurQ produces an ammonia molecule by converting glutamine to glutamate. PurL transfers the ammonia molecule to FGAR to form FGAM in an ATP-dependent manner. PurS interacts with PurQ and PurL and is thought to assist in the transfer of the ammonia molecule from PurQ to PurL. In Rhodopseudomonas palustris (strain TIE-1), this protein is Phosphoribosylformylglycinamidine synthase subunit PurL.